Here is a 447-residue protein sequence, read N- to C-terminus: UPF0210 protein lp_2507 (447 aa).

The protein belongs to the UPF0210 family. In terms of assembly, homodimer.

In Lactiplantibacillus plantarum (strain ATCC BAA-793 / NCIMB 8826 / WCFS1) (Lactobacillus plantarum), this protein is UPF0210 protein lp_2507.